A 599-amino-acid chain; its full sequence is Protein linkin (599 aa).

The first 19 residues, M1 to S19, serve as a signal peptide directing secretion. Residues L20–L553 are Extracellular-facing. Residues N50, N117, N163, N361, and N378 are each glycosylated (N-linked (GlcNAc...) asparagine). The chain crosses the membrane as a helical span at residues I554–F574. Topologically, residues L575 to M599 are cytoplasmic.

This sequence belongs to the TIP family. As to expression, expressed in all somatic gonadal cells including distal tip cells, anchor cell, uterine precursor cells and spermatheca precursor cells of the hermaphrodite. Also expressed in the pharynx, pharyngeal-intestinal valve, intestine, excretory cell and canal, seam cells, a subset of hypodermal cells, vulval precursor cells of the hermaphrodite and hook precursor cells in the male.

The protein resides in the apical cell membrane. It localises to the lateral cell membrane. Functionally, probable cell adhesion protein involved in gonadal cell migration. This Caenorhabditis elegans protein is Protein linkin.